A 318-amino-acid chain; its full sequence is Taste receptor type 2 member 60 (318 aa).

At 1 to 7 (MNGDHMV) the chain is on the extracellular side. The helical transmembrane segment at 8–28 (LGSSVTDKKAIILVTILLLLR) threads the bilayer. The Cytoplasmic portion of the chain corresponds to 29-40 (LVAIAGNGFITA). Residues 41-61 (ALGVEWVLRRMLLPCDKLLVS) form a helical membrane-spanning segment. Residues 62 to 88 (LGASHFCLQSVVMGKTIYVFLYPMAFP) are Extracellular-facing. A helical transmembrane segment spans residues 89 to 109 (YNPVLQFLAFQWDFLNAATLW). Over 110–128 (FSTWLSVFYCVKIATFTHP) the chain is Cytoplasmic. Residues 129 to 149 (VFFWLKHKLSGWLPWMVFSYV) traverse the membrane as a helical segment. At 150 to 183 (GLSSFTTILFFIGNHRMYQNYLKNHLQPWNVTGN) the chain is on the extracellular side. N179 is a glycosylation site (N-linked (GlcNAc...) asparagine). The helical transmembrane segment at 184–204 (SIRSYCEKFYLFPLKMITWTM) threads the bilayer. Over 205–234 (PTAVFFICMILLITSLGRHMKKALLTTSGF) the chain is Cytoplasmic. The helical transmembrane segment at 235–255 (REPSVQAHIKALLALLSFAML) threads the bilayer. Topologically, residues 256–264 (FISYFLSLV) are extracellular. Residues 265 to 285 (FSAAGIFPPLDFKFWVWESVI) form a helical membrane-spanning segment. The Cytoplasmic segment spans residues 286–318 (YLCAAVHPIILLFSNCRLRAVLKSRRSSRCGTP).

It belongs to the G-protein coupled receptor T2R family.

It is found in the membrane. Receptor that may play a role in the perception of bitterness and is gustducin-linked. May play a role in sensing the chemical composition of the gastrointestinal content. The activity of this receptor may stimulate alpha gustducin, mediate PLC-beta-2 activation and lead to the gating of TRPM5. The protein is Taste receptor type 2 member 60 (TAS2R60) of Pan troglodytes (Chimpanzee).